The primary structure comprises 207 residues: Ribonuclease HII (207 aa).

Residues 20 to 207 enclose the RNase H type-2 domain; the sequence is QLFAGVDEVG…KPVKRVLGIE (188 aa). A divalent metal cation is bound by residues D26, E27, and D118.

It belongs to the RNase HII family. The cofactor is Mn(2+). It depends on Mg(2+) as a cofactor.

It is found in the cytoplasm. The enzyme catalyses Endonucleolytic cleavage to 5'-phosphomonoester.. Functionally, endonuclease that specifically degrades the RNA of RNA-DNA hybrids. The polypeptide is Ribonuclease HII (Aliivibrio salmonicida (strain LFI1238) (Vibrio salmonicida (strain LFI1238))).